A 251-amino-acid chain; its full sequence is Triosephosphate isomerase (251 aa).

Substrate is bound at residue 9 to 11; the sequence is NWK. Residue His95 is the Electrophile of the active site. Catalysis depends on Glu167, which acts as the Proton acceptor. Substrate is bound by residues Gly173, Ser212, and 233 to 234; that span reads GG.

This sequence belongs to the triosephosphate isomerase family. In terms of assembly, homodimer.

It localises to the cytoplasm. The catalysed reaction is D-glyceraldehyde 3-phosphate = dihydroxyacetone phosphate. The protein operates within carbohydrate biosynthesis; gluconeogenesis. Its pathway is carbohydrate degradation; glycolysis; D-glyceraldehyde 3-phosphate from glycerone phosphate: step 1/1. Functionally, involved in the gluconeogenesis. Catalyzes stereospecifically the conversion of dihydroxyacetone phosphate (DHAP) to D-glyceraldehyde-3-phosphate (G3P). This chain is Triosephosphate isomerase, found in Pseudomonas fluorescens (strain ATCC BAA-477 / NRRL B-23932 / Pf-5).